Here is a 630-residue protein sequence, read N- to C-terminus: tRNA uridine 5-carboxymethylaminomethyl modification enzyme MnmG (630 aa).

FAD contacts are provided by residues 13 to 18 (GGGHAG), Val125, and Ser180. 273 to 287 (GPRYCPSIEDKIHRF) is a binding site for NAD(+). Gln370 provides a ligand contact to FAD.

It belongs to the MnmG family. As to quaternary structure, homodimer. Heterotetramer of two MnmE and two MnmG subunits. FAD serves as cofactor.

It localises to the cytoplasm. Its function is as follows. NAD-binding protein involved in the addition of a carboxymethylaminomethyl (cmnm) group at the wobble position (U34) of certain tRNAs, forming tRNA-cmnm(5)s(2)U34. The sequence is that of tRNA uridine 5-carboxymethylaminomethyl modification enzyme MnmG from Shewanella woodyi (strain ATCC 51908 / MS32).